The primary structure comprises 67 residues: Large ribosomal subunit protein bL35 (67 aa).

Belongs to the bacterial ribosomal protein bL35 family.

The protein is Large ribosomal subunit protein bL35 of Sinorhizobium medicae (strain WSM419) (Ensifer medicae).